A 106-amino-acid polypeptide reads, in one-letter code: MVNVPKTRKTYCKGKECRKHTQHKVTQYKAGKASLFAQGKRRYDRKQRGYGGQTKQIFHKKAKTTKKVVLKLECVVCKTKAQLSLKRCKHFELGGDKKQKGQALQF.

The protein belongs to the eukaryotic ribosomal protein eL42 family.

The chain is Large ribosomal subunit protein eL42 (RPL44) from Schwanniomyces occidentalis (Yeast).